Here is a 111-residue protein sequence, read N- to C-terminus: Universal stress protein B (111 aa).

Helical transmembrane passes span 1 to 21 (MIST…NMAR) and 90 to 110 (FILT…LLIW).

It belongs to the universal stress protein B family.

Its subcellular location is the cell inner membrane. The protein is Universal stress protein B of Escherichia fergusonii (strain ATCC 35469 / DSM 13698 / CCUG 18766 / IAM 14443 / JCM 21226 / LMG 7866 / NBRC 102419 / NCTC 12128 / CDC 0568-73).